The primary structure comprises 221 residues: Cysteine protease inhibitor 8 (221 aa).

The first 26 residues, 1–26 (IPSINILSFLLLSSTLSLVAFARSFT), serve as a signal peptide directing secretion. A propeptide spanning residues 27–42 (SENPIVLPTTCHDDDN) is cleaved from the precursor. Residues 29–34 (NPIVLP) carry the Vacuolar targeting signal motif. Disulfide bonds link C84–C136 and C184–C190.

It belongs to the protease inhibitor I3 (leguminous Kunitz-type inhibitor) family.

It localises to the vacuole. Functionally, inhibitor of cysteine proteases. May protect the plant by inhibiting proteases of invading organisms. This chain is Cysteine protease inhibitor 8, found in Solanum tuberosum (Potato).